The sequence spans 667 residues: tRNA 5-methylaminomethyl-2-thiouridine biosynthesis bifunctional protein MnmC (667 aa).

Polar residues predominate over residues 1–12 (MSKQQAPNTTGI). Residues 1 to 20 (MSKQQAPNTTGIGTADLQWH) form a disordered region. The segment at 1-240 (MSKQQAPNTT…KRECLRGVLE (240 aa)) is tRNA (mnm(5)s(2)U34)-methyltransferase. Residues 268-667 (IGAGIAGAAC…LVRSLKKPPL (400 aa)) are FAD-dependent cmnm(5)s(2)U34 oxidoreductase.

In the N-terminal section; belongs to the methyltransferase superfamily. tRNA (mnm(5)s(2)U34)-methyltransferase family. This sequence in the C-terminal section; belongs to the DAO family. The cofactor is FAD.

It is found in the cytoplasm. The catalysed reaction is 5-aminomethyl-2-thiouridine(34) in tRNA + S-adenosyl-L-methionine = 5-methylaminomethyl-2-thiouridine(34) in tRNA + S-adenosyl-L-homocysteine + H(+). Functionally, catalyzes the last two steps in the biosynthesis of 5-methylaminomethyl-2-thiouridine (mnm(5)s(2)U) at the wobble position (U34) in tRNA. Catalyzes the FAD-dependent demodification of cmnm(5)s(2)U34 to nm(5)s(2)U34, followed by the transfer of a methyl group from S-adenosyl-L-methionine to nm(5)s(2)U34, to form mnm(5)s(2)U34. This is tRNA 5-methylaminomethyl-2-thiouridine biosynthesis bifunctional protein MnmC from Magnetococcus marinus (strain ATCC BAA-1437 / JCM 17883 / MC-1).